The chain runs to 706 residues: Zinc finger CCCH domain-containing protein 56 (706 aa).

2 ANK repeats span residues 83–113 (EQRT…ELNL) and 118–150 (DKST…DPNI). Residues 211 to 221 (SSLLSLDSVSS) are compositionally biased toward low complexity. Residues 211 to 235 (SSLLSLDSVSSPTKPHGTDVTFASE) are disordered. C3H1-type zinc fingers lie at residues 302-324 (PCPD…HGVF) and 332-356 (QYRT…HANE). 3 disordered regions span residues 396 to 427 (PSAA…QQNI), 545 to 616 (SPKN…QTHG), and 652 to 692 (QMLK…TRES). Polar residues-rich tracts occupy residues 397–427 (SAAQ…QQNI) and 545–560 (SPKN…QASS). At Ser568 the chain carries Phosphoserine. Low complexity predominate over residues 580 to 592 (SRSLSSRDFGSSL). 3 stretches are compositionally biased toward polar residues: residues 600–616 (DSGS…QTHG), 652–667 (QMLK…NRVV), and 677–686 (QGGSSVNPHN).

The sequence is that of Zinc finger CCCH domain-containing protein 56 from Arabidopsis thaliana (Mouse-ear cress).